Consider the following 699-residue polypeptide: MSKINKLEHIRNIGICAHIDAGKTTTTERILYYTGKSHKIGEVHEGGATMDWMEQEQERGITITSAATTCRWQDKIINIIDTPGHVDFTIEVERSLRVLDGAVAVFDGVAGVEPQSETVWRQADKYNVPRMCFVNKMDRMGADFYRCVEMLKDRLGAKPLVIQLPVGIEENFKGIIDLIKMKAVIWKDEALGAEYFEEDIPADMKDKAEEYRAKLLDMVVELDDHVMEKYLSGEEVTAEEIKRLIRKGTISAAFYPVLCGSAFKNKGVQPLLDAVVDFLPSPIDIGIVKGMEVSTGEEKDFPISVTEPFAALAFKIMNDPFVGSLTFIRIYSGKITSGTTVINTVKNKREKIGRMLLMHANNREDVKEASAGDIVALAGLKDTTTGDTLSDIDQQVILERMEFPEPVIELAVEPKSTADQEKMGLALSRLAAEDPSFRVSTDYETGQTVIKGMGELHLEIIIDRMRREFKVEANIGAPQVAYRETITKVCEIDYTHKKQSGGAGQFARVKIIFEPLKEVKDLKDEDKNKIFVFESKIIGGAVPKEYIPGVEKGLNNIRETGVIAGYPMIDFKATLVDGAFHDVDSSVLAFEIAAKAAFREGMPKGNPKLLEPIMQVEVITPDEYMGDIIGDLNSRRGQIQSMDPRGNAQVVTANIPLAEMFGYVNTLRSLSQGRAQFSMIFSHYDQVPSQVADIIKAKK.

A tr-type G domain is found at 8–283; sequence EHIRNIGICA…AVVDFLPSPI (276 aa). GTP is bound by residues 17 to 24, 81 to 85, and 135 to 138; these read AHIDAGKT, DTPGH, and NKMD.

The protein belongs to the TRAFAC class translation factor GTPase superfamily. Classic translation factor GTPase family. EF-G/EF-2 subfamily.

It localises to the cytoplasm. Catalyzes the GTP-dependent ribosomal translocation step during translation elongation. During this step, the ribosome changes from the pre-translocational (PRE) to the post-translocational (POST) state as the newly formed A-site-bound peptidyl-tRNA and P-site-bound deacylated tRNA move to the P and E sites, respectively. Catalyzes the coordinated movement of the two tRNA molecules, the mRNA and conformational changes in the ribosome. This chain is Elongation factor G, found in Rickettsia peacockii (strain Rustic).